Consider the following 123-residue polypeptide: Large ribosomal subunit protein bL19 (123 aa).

The protein belongs to the bacterial ribosomal protein bL19 family.

In terms of biological role, this protein is located at the 30S-50S ribosomal subunit interface and may play a role in the structure and function of the aminoacyl-tRNA binding site. This is Large ribosomal subunit protein bL19 from Thermomicrobium roseum (strain ATCC 27502 / DSM 5159 / P-2).